Reading from the N-terminus, the 824-residue chain is MEEKYNPSAVEEKWQGYWAEHESFKATEDPTRKKYYLLEMFPYPSGKIHMGHVRNYSIGDVIARFKRMQGYNVLHPMGWDAFGMPAENAAIQHKSHPAKWTYENIAYMRGQLKTLGLSYDWDRELATCDLDYYKWEQRIFLEMYKKGLAYKKSSAVNWCPKCETVLANEQVEDGCCWRCDSPVRQKELEQWSFRITNYAQELLDDTYKLTGWPERVLTMQRNWIGRSTGCEIDFPLENGLGKIKVFTTRQDTLFGATFMSLAAEHPMALDLAGDAQRAQVEAFIDKVKKTDRIKRGAEDLEKEGVFTGSYCVNPVTNTKMPIYLANFVLMDYGTGAVMAVPTHDQRDFEFAKKYNLPLKVVIQPEGETLDPAAMTEAYTAEGIMANSGRFDGMGNGDAKEAIADFLEKEGIGKKTVNFRLRDWGISRQRYWGNPIPVINCDLCGVVAVPEADLPVVLPMDAEFTGEGGNPLARVDSFTTCTCPQCGEAARRETDTMDTFVQSSWYFLRYCSPKFSAGPLDREKVEAWMPVDQYIGGIEHAVLHLLYARFFTKVLRDLGYCNVDEPFSNLLTQGMVIKDGAKMSKSKGNVVDPNALIERYGADTARLFSLFAAPPEKDLDWSDQGVDGSYRFLNRVWRLVYDVLPVIGEAGAVNPDSLGAEAKKLRRAVHKTIKKVSEDVEERFHFNTAIAAVMELVNAIQAFAAKDAPENVAVVREAVESVVRLLAPFVPHFAEELWSQLGHDTVLEAAGWPGYDAAAVVDEEVTVVIQVNGKLRSKLTVAPDAKEEEVRAQALADDKIKPYLEGKDVKKVVYVPGKLVSIVVA.

The 'HIGH' region motif lies at 42 to 52 (PYPSGKIHMGH). The short motif at 581 to 585 (KMSKS) is the 'KMSKS' region element. Lysine 584 is a binding site for ATP.

The protein belongs to the class-I aminoacyl-tRNA synthetase family.

It is found in the cytoplasm. It carries out the reaction tRNA(Leu) + L-leucine + ATP = L-leucyl-tRNA(Leu) + AMP + diphosphate. This is Leucine--tRNA ligase from Geobacter sp. (strain M21).